The following is a 292-amino-acid chain: ATP synthase gamma chain (292 aa).

This sequence belongs to the ATPase gamma chain family. As to quaternary structure, F-type ATPases have 2 components, CF(1) - the catalytic core - and CF(0) - the membrane proton channel. CF(1) has five subunits: alpha(3), beta(3), gamma(1), delta(1), epsilon(1). CF(0) has three main subunits: a, b and c.

The protein localises to the cell inner membrane. Its function is as follows. Produces ATP from ADP in the presence of a proton gradient across the membrane. The gamma chain is believed to be important in regulating ATPase activity and the flow of protons through the CF(0) complex. In Nautilia profundicola (strain ATCC BAA-1463 / DSM 18972 / AmH), this protein is ATP synthase gamma chain.